The primary structure comprises 248 residues: 5'-nucleotidase SurE (248 aa).

Positions 8, 9, 39, and 91 each coordinate a divalent metal cation.

It belongs to the SurE nucleotidase family. A divalent metal cation serves as cofactor.

Its subcellular location is the cytoplasm. The enzyme catalyses a ribonucleoside 5'-phosphate + H2O = a ribonucleoside + phosphate. In terms of biological role, nucleotidase that shows phosphatase activity on nucleoside 5'-monophosphates. This Geotalea uraniireducens (strain Rf4) (Geobacter uraniireducens) protein is 5'-nucleotidase SurE.